Consider the following 200-residue polypeptide: Protein DMP7 (200 aa).

4 helical membrane-spanning segments follow: residues 37-57 (LSNLLPTGSVMSFQIMCPVLT), 69-89 (WLTCFLVSLCAISCFLFSFTD), 129-149 (ILDFIHAIMSMLVFFAVSMFD), and 167-187 (ILTSLPFVIGVICGAFFLAFP).

It belongs to the plant DMP1 protein family. As to expression, expressed in leaves, stems, flowers, siliques and roots, especially in the vasculature.

The protein resides in the endoplasmic reticulum membrane. Its function is as follows. Involved in membrane remodeling. This chain is Protein DMP7, found in Arabidopsis thaliana (Mouse-ear cress).